A 156-amino-acid chain; its full sequence is Protein-export protein SecB (156 aa).

It belongs to the SecB family. In terms of assembly, homotetramer, a dimer of dimers. One homotetramer interacts with 1 SecA dimer.

The protein localises to the cytoplasm. One of the proteins required for the normal export of preproteins out of the cell cytoplasm. It is a molecular chaperone that binds to a subset of precursor proteins, maintaining them in a translocation-competent state. It also specifically binds to its receptor SecA. The chain is Protein-export protein SecB from Aliivibrio fischeri (strain ATCC 700601 / ES114) (Vibrio fischeri).